Reading from the N-terminus, the 1478-residue chain is Adhesion G protein-coupled receptor L2 (1478 aa).

An N-terminal signal peptide occupies residues 1–25 (MVSSGCRMRSLWFIIIISFLPNTEG). Over 26–855 (FSRAALPFGL…VHELLLTVIT (830 aa)) the chain is Extracellular. In terms of domain architecture, SUEL-type lectin spans 41-130 (SCEGYSIDLR…KYLEVQYECV (90 aa)). Residue asparagine 99 is glycosylated (N-linked (GlcNAc...) asparagine). Residues 139 to 398 (VCPGTLKAIV…ILRYSLEFGP (260 aa)) enclose the Olfactomedin-like domain. An intrachain disulfide couples cysteine 140 to cysteine 322. Asparagine 335 is a glycosylation site (N-linked (GlcNAc...) asparagine). Residues 422–458 (VSTTSTTSQKGPMSTTVAGSQEGSKGTKAPPAVSTTK) form a disordered region. Positions 430–445 (QKGPMSTTVAGSQEGS) are enriched in polar residues. N-linked (GlcNAc...) asparagine glycosylation is found at asparagine 524, asparagine 633, asparagine 735, asparagine 748, asparagine 791, asparagine 796, and asparagine 817. The region spanning 663-841 (TRVSMPTENI…AILMAHREIA (179 aa)) is the GAIN-B domain. Disulfide bonds link cysteine 792–cysteine 823 and cysteine 811–cysteine 825. The GPS stretch occupies residues 792–841 (CSFWNYSERTMMGYWSTQGCKLVDTNKTRTTCACSHLTNFAILMAHREIA). Residues 856–876 (WVGIVISLVCLAICIFTFCFF) traverse the membrane as a helical segment. The Cytoplasmic segment spans residues 877–884 (RGLQSDRN). The helical transmembrane segment at 885–905 (TIHKNLCINLFIAEFIFLIGI) threads the bilayer. The Extracellular segment spans residues 906 to 911 (DKTKYM). The chain crosses the membrane as a helical span at residues 912-932 (IACPIFAGLLHFFFLAAFAWM). The Cytoplasmic portion of the chain corresponds to 933–955 (CLEGVQLYLMLVEVFESEYSRKK). Residues 956 to 976 (YYYVAGYLFPATVVGVSAAID) traverse the membrane as a helical segment. Residues 977 to 994 (YKSYGTEKACWLHVDNYF) lie on the Extracellular side of the membrane. A helical transmembrane segment spans residues 995-1015 (IWSFIGPVTFIILLNIIFLVI). Residues 1016 to 1056 (TLCKMVKHSNTLKPDSSRLENINNYRVCDGYYNTDLPGSWV) lie on the Cytoplasmic side of the membrane. A helical membrane pass occupies residues 1057 to 1077 (LGAFALLCLLGLTWSFGLLFI). Residues 1078–1081 (NEET) lie on the Extracellular side of the membrane. The chain crosses the membrane as a helical span at residues 1082 to 1102 (IVMAYLFTIFNAFQGVFIFIF). At 1103-1478 (HCALQKKVRK…EGQMQLVTSL (376 aa)) the chain is on the cytoplasmic side. Residues 1378–1419 (AEDHLQSPNRDSLYTSMPNLRDSPYQESSPDMEEDLSPSRRS) are disordered. The span at 1383-1395 (QSPNRDSLYTSMP) shows a compositional bias: polar residues. 3 positions are modified to phosphoserine: serine 1393, serine 1428, and serine 1449.

It belongs to the G-protein coupled receptor 2 family. Adhesion G-protein coupled receptor (ADGR) subfamily. In terms of assembly, heterodimer of 2 chains generated by proteolytic processing; the large extracellular N-terminal fragment and the membrane-bound C-terminal fragment predominantly remain associated and non-covalently linked. Post-translationally, autoproteolytically processed at the GPS region of the GAIN-B domain; this cleavage modulates receptor activity. As to expression, ubiquitously expressed.

It localises to the postsynaptic cell membrane. Its activity is regulated as follows. Forms a heterodimer of 2 chains generated by proteolytic processing that remain associated through non-covalent interactions mediated by the GAIN-B domain. In the inactivated receptor, the Stachel sequence (also named stalk) is embedded in the GAIN-B domain, where it adopts a beta-strand conformation. On activation, the Stachel moves into the 7 transmembrane region and adopts a twisted hook-shaped configuration that forms contacts within the receptor, leading to coupling of a G-alpha protein, which activates signaling. The cleaved GAIN-B and N-terminal domains can then dissociate from the rest of the receptor. Its function is as follows. Orphan adhesion G-protein coupled receptor (aGPCR), which mediates synapse specificity. Ligand binding causes a conformation change that triggers signaling via guanine nucleotide-binding proteins (G proteins) and modulates the activity of downstream effectors. Following G-protein coupled receptor activation, associates with cell adhesion molecules that are expressed at the surface of adjacent cells to direct synapse specificity. Specifically mediates the establishment of perforant-path synapses on CA1-region pyramidal neurons in the hippocampus. Localizes to postsynaptic spines in excitatory synapses in the S.lacunosum-moleculare and interacts with presynaptic cell adhesion molecules, such as teneurins, promoting synapse formation. This chain is Adhesion G protein-coupled receptor L2 (ADGRL2), found in Bos taurus (Bovine).